The sequence spans 389 residues: Carbamoyl phosphate synthase small chain (389 aa).

Residues 1–197 form a CPSase region; the sequence is MMSSPAKAAK…AAKDASIGDD (197 aa). Residues Ser51, Gly249, and Gly251 each contribute to the L-glutamine site. The 187-residue stretch at 201–387 folds into the Glutamine amidotransferase type-1 domain; the sequence is HVVCMDFGMK…QEQLNEKCGV (187 aa). The active-site Nucleophile is the Cys276. 5 residues coordinate L-glutamine: Leu277, Gln280, Asn318, Gly320, and Phe321. Residues His360 and Glu362 contribute to the active site.

This sequence belongs to the CarA family. Composed of two chains; the small (or glutamine) chain promotes the hydrolysis of glutamine to ammonia, which is used by the large (or ammonia) chain to synthesize carbamoyl phosphate. Tetramer of heterodimers (alpha,beta)4.

The enzyme catalyses hydrogencarbonate + L-glutamine + 2 ATP + H2O = carbamoyl phosphate + L-glutamate + 2 ADP + phosphate + 2 H(+). The catalysed reaction is L-glutamine + H2O = L-glutamate + NH4(+). Its pathway is amino-acid biosynthesis; L-arginine biosynthesis; carbamoyl phosphate from bicarbonate: step 1/1. It participates in pyrimidine metabolism; UMP biosynthesis via de novo pathway; (S)-dihydroorotate from bicarbonate: step 1/3. Small subunit of the glutamine-dependent carbamoyl phosphate synthetase (CPSase). CPSase catalyzes the formation of carbamoyl phosphate from the ammonia moiety of glutamine, carbonate, and phosphate donated by ATP, constituting the first step of 2 biosynthetic pathways, one leading to arginine and/or urea and the other to pyrimidine nucleotides. The small subunit (glutamine amidotransferase) binds and cleaves glutamine to supply the large subunit with the substrate ammonia. The chain is Carbamoyl phosphate synthase small chain from Rhodopirellula baltica (strain DSM 10527 / NCIMB 13988 / SH1).